The primary structure comprises 363 residues: Autophagy-related protein 3 (363 aa).

Basic and acidic residues-rich tracts occupy residues 84–106 and 129–138; these read DFAG…RGDG and ARVRDVRTVD. The interval 84-171 is flexible region; that stretch reads DFAGDAGHDE…DDEAIIRDPK (88 aa). Positions 84 to 174 are disordered; that stretch reads DFAGDAGHDE…AIIRDPKADN (91 aa). The span at 139–164 shows a compositional bias: acidic residues; that stretch reads ESGEMGEREDDEDDIPDMEDDDDDDE. Catalysis depends on Cys247, which acts as the Glycyl thioester intermediate. Positions 251-339 are handle region; sequence SVMKTLLDRA…EEEVAIRVDQ (89 aa).

It belongs to the ATG3 family. In terms of assembly, monomer. Interacts with atg8 through an intermediate thioester bond through the C-terminal Gly of atg8. Interacts with the C-terminal region of the E1-like atg7 enzyme. Also interacts with the atg12-atg5 conjugate.

It localises to the cytoplasm. In terms of biological role, E2 conjugating enzyme required for the cytoplasm to vacuole transport (Cvt) and autophagy. Required for selective autophagic degradation of the nucleus (nucleophagy) as well as for mitophagy which contributes to regulate mitochondrial quantity and quality by eliminating the mitochondria to a basal level to fulfill cellular energy requirements and preventing excess ROS production. Responsible for the E2-like covalent binding of phosphatidylethanolamine to the C-terminal Gly of atg8. The atg12-atg5 conjugate plays a role of an E3 and promotes the transfer of atg8 from atg3 to phosphatidylethanolamine (PE). This step is required for the membrane association of atg8. The formation of the atg8-phosphatidylethanolamine conjugate is essential for autophagy and for the cytoplasm to vacuole transport (Cvt). The atg8-PE conjugate mediates tethering between adjacent membranes and stimulates membrane hemifusion, leading to expansion of the autophagosomal membrane during autophagy. Required for normal mycelial growth and conidiogenesis, and regulates sclerotial formation. Plays an essential role in pathogenesis. This chain is Autophagy-related protein 3, found in Botryotinia fuckeliana (strain BcDW1) (Noble rot fungus).